The following is a 183-amino-acid chain: MGKWVSVAEKRQFLKWFLTQQLKRKDAKRILEYLLQHYHLLEQVMFTEEIRGRERTLVISTLQSDEPGFAFYLYRRKIEDPIRALGELQANPADPIYLILHFHGKAQNHQYLQMLDSESREYIKRFKQFQAYKEETDSLIEAVLIENEKKMLLQQIDEALDLKDERRFKDLVKKLQELDRRSS.

This sequence belongs to the UPF0302 family.

The protein is UPF0302 protein BH3876 of Halalkalibacterium halodurans (strain ATCC BAA-125 / DSM 18197 / FERM 7344 / JCM 9153 / C-125) (Bacillus halodurans).